Consider the following 450-residue polypeptide: Adenosylhomocysteinase (450 aa).

Substrate is bound by residues threonine 59, aspartate 135, and glutamate 160. Residue 161–163 (TTT) coordinates NAD(+). Residues lysine 190 and aspartate 194 each contribute to the substrate site. NAD(+)-binding positions include asparagine 195, 224 to 229 (GFGDVG), glutamate 247, 303 to 305 (IGH), and asparagine 350.

The protein belongs to the adenosylhomocysteinase family. The cofactor is NAD(+).

The protein resides in the cytoplasm. It carries out the reaction S-adenosyl-L-homocysteine + H2O = L-homocysteine + adenosine. It functions in the pathway amino-acid biosynthesis; L-homocysteine biosynthesis; L-homocysteine from S-adenosyl-L-homocysteine: step 1/1. Adenosylhomocysteine is a competitive inhibitor of S-adenosyl-L-methionine-dependent methyl transferase reactions; therefore adenosylhomocysteinase may play a key role in the control of methylations via regulation of the intracellular concentration of adenosylhomocysteine. The sequence is that of Adenosylhomocysteinase (SAH1) from Candida albicans (strain SC5314 / ATCC MYA-2876) (Yeast).